A 218-amino-acid polypeptide reads, in one-letter code: MGQKINPLGFRLGTTQSHRSFWFAQPKNYSKGLQEDEKIRDCIKNYVQKHMRISSGFEGIARIDIKKRIDLIQVIIHIGFANMLIEGRARGIEELQTNVQKSFHSVNRRLNIAIARVPRPYGQPNILAEYIALQLKNRVSFRKAMKKAIELAEQADAKGIQVQIAGRLNGNEIARVEWIREGRVPLQTIRVKIDHCSYPVRTIYGVLGIKIWIFLDEE.

In terms of domain architecture, KH type-2 spans 47–118 (VQKHMRISSG…RLNIAIARVP (72 aa)).

This sequence belongs to the universal ribosomal protein uS3 family. In terms of assembly, part of the 30S ribosomal subunit.

The protein localises to the plastid. It is found in the chloroplast. This Nuphar advena (Common spatterdock) protein is Small ribosomal subunit protein uS3c (rps3).